A 763-amino-acid polypeptide reads, in one-letter code: Actin filament-associated protein 1-like 1 (763 aa).

The interval 83–137 (LQDMPEDEAESCKAASPEPAKSPSLRHTADLPPPLPNRPPPEDYYEEALPLGPGK) is disordered. Ser98, Ser104, and Ser153 each carry phosphoserine. The disordered stretch occupies residues 169-210 (TRMNGELKNSYNDSDAMSSSYESYDEEEEEGKGPQPTHQWPS). Over residues 175–185 (LKNSYNDSDAM) the composition is skewed to polar residues. Positions 220–316 (DCRICAFLLR…WLKVIREVSK (97 aa)) constitute a PH 1 domain. 2 positions are modified to phosphoserine: Ser329 and Ser343. Residues 343-380 (SQEKQTSDSDSLGMGDSCSTLGREHGKGKKSSLSELKG) form a disordered region. Residues 413 to 507 (EVPCCGYLNV…WLGLLLVEMG (95 aa)) enclose the PH 2 domain. At Tyr552 the chain carries Phosphotyrosine. The disordered stretch occupies residues 561-604 (QDEEPERPPGAQVKRHASTCSEKSHRVDPQVKVKRHASSAHQYK). Basic and acidic residues predominate over residues 582–591 (EKSHRVDPQV). Positions 606–694 (GKNRAEEDAR…LVTVKERLQQ (89 aa)) form a coiled coil. Positions 712–724 (SGETANKPQNNVP) are enriched in polar residues. A disordered region spans residues 712–763 (SGETANKPQNNVPEQPLPVNCVSELRKRSPSIINSNQGRVLQKAKEWEMKKT). A Phosphoserine modification is found at Ser742. Residues 754-763 (KAKEWEMKKT) are compositionally biased toward basic and acidic residues.

Interacts with CTTN.

The protein resides in the cytoplasm. Its subcellular location is the cell projection. It is found in the podosome. The protein localises to the invadopodium. It localises to the cytoskeleton. The protein resides in the stress fiber. Its function is as follows. May be involved in podosome and invadosome formation. The chain is Actin filament-associated protein 1-like 1 (AFAP1L1) from Bos taurus (Bovine).